Here is a 365-residue protein sequence, read N- to C-terminus: Histidinol-phosphate aminotransferase (365 aa).

Residues 1-22 form a disordered region; it reads MSRPVPNPGILDIAPYTPGKSP. Residue lysine 221 is modified to N6-(pyridoxal phosphate)lysine.

Belongs to the class-II pyridoxal-phosphate-dependent aminotransferase family. Histidinol-phosphate aminotransferase subfamily. Homodimer. It depends on pyridoxal 5'-phosphate as a cofactor.

The enzyme catalyses L-histidinol phosphate + 2-oxoglutarate = 3-(imidazol-4-yl)-2-oxopropyl phosphate + L-glutamate. The protein operates within amino-acid biosynthesis; L-histidine biosynthesis; L-histidine from 5-phospho-alpha-D-ribose 1-diphosphate: step 7/9. The sequence is that of Histidinol-phosphate aminotransferase from Rhodopseudomonas palustris (strain BisB5).